The primary structure comprises 37 residues: Potassium channel toxin alpha-KTx 3.9 (37 aa).

3 disulfides stabilise this stretch: cysteine 7/cysteine 27, cysteine 13/cysteine 32, and cysteine 17/cysteine 34. Residues 25–32 (GKCMNRKC) are interaction with Ca(2+)-activated K(+) channels.

The protein belongs to the short scorpion toxin superfamily. Potassium channel inhibitor family. Alpha-KTx 03 subfamily. Expressed by the venom gland.

Its subcellular location is the secreted. Binds and inhibits potassium channels. Intracerebroventricular injection into mice induces paralyzing symptoms followed by death. Its binding affinity to rat brain synaptosomes is 5-fold lower than this of KTX 1. The protein is Potassium channel toxin alpha-KTx 3.9 (KTX3) of Buthus occitanus tunetanus (Common European scorpion).